We begin with the raw amino-acid sequence, 375 residues long: Actin, cytoplasmic (375 aa).

It belongs to the actin family.

It localises to the cytoplasm. The protein resides in the cytoskeleton. It catalyses the reaction ATP + H2O = ADP + phosphate + H(+). Its function is as follows. Actins are highly conserved proteins that are involved in various types of cell motility and are ubiquitously expressed in all eukaryotic cells. The polypeptide is Actin, cytoplasmic (Oxytricha trifallax (Sterkiella histriomuscorum)).